We begin with the raw amino-acid sequence, 513 residues long: 2-isopropylmalate synthase (513 aa).

The region spanning 5–267 (LVIFDTTLRD…ETRIDTTQIV (263 aa)) is the Pyruvate carboxyltransferase domain. Mn(2+) is bound by residues Asp14, His202, His204, and Asn238. The segment at 393-513 (KLVYSRVCSE…LDKVKAQGGV (121 aa)) is regulatory domain.

The protein belongs to the alpha-IPM synthase/homocitrate synthase family. LeuA type 1 subfamily. In terms of assembly, homodimer. Requires Mn(2+) as cofactor.

It localises to the cytoplasm. The catalysed reaction is 3-methyl-2-oxobutanoate + acetyl-CoA + H2O = (2S)-2-isopropylmalate + CoA + H(+). The protein operates within amino-acid biosynthesis; L-leucine biosynthesis; L-leucine from 3-methyl-2-oxobutanoate: step 1/4. Functionally, catalyzes the condensation of the acetyl group of acetyl-CoA with 3-methyl-2-oxobutanoate (2-ketoisovalerate) to form 3-carboxy-3-hydroxy-4-methylpentanoate (2-isopropylmalate). The polypeptide is 2-isopropylmalate synthase (Dechloromonas aromatica (strain RCB)).